Consider the following 279-residue polypeptide: DegV domain-containing protein SpyM3_1149 (279 aa).

Positions 4 to 278 (IKIVTDSSIT…EGAFAVMVRY (275 aa)) constitute a DegV domain. The hexadecanoate site is built by Thr-62 and Ser-95.

Functionally, may bind long-chain fatty acids, such as palmitate, and may play a role in lipid transport or fatty acid metabolism. This chain is DegV domain-containing protein SpyM3_1149, found in Streptococcus pyogenes serotype M3 (strain ATCC BAA-595 / MGAS315).